The sequence spans 128 residues: CD59 glycoprotein (128 aa).

The N-terminal stretch at 1–25 is a signal peptide; sequence MGIQGGSVLFGLLLVLAVFCHSGHS. The UPAR/Ly6 domain occupies 26-108; the sequence is LQCYNCPNPT…QLENGGTSLS (83 aa). Intrachain disulfides connect Cys-28/Cys-51, Cys-31/Cys-38, Cys-44/Cys-64, Cys-70/Cys-88, and Cys-89/Cys-94. The N-linked (GlcNAc...) asparagine glycan is linked to Asn-43. Asn-102 is lipidated: GPI-anchor amidated asparagine. The propeptide at 103 to 128 is removed in mature form; sequence GGTSLSEKTVVLLVTLLLAAAWCLHP.

In terms of assembly, interacts with T-cell surface antigen CD2. N- and O-glycosylated.

Its subcellular location is the cell membrane. The protein localises to the secreted. Potent inhibitor of the complement membrane attack complex (MAC) action, which protects self-cells from damage during complement activation. Acts by binding to the beta-haipins of C8 (C8A and C8B) components of the assembling MAC, forming an intermolecular beta-sheet that prevents incorporation of the multiple copies of C9 required for complete formation of the osmolytic pore. The chain is CD59 glycoprotein from Chlorocebus aethiops (Green monkey).